The following is a 532-amino-acid chain: Intercellular adhesion molecule 1 (532 aa).

The signal sequence occupies residues 1 to 27; it reads MAPSSPRPALPALLVLLGALFPGPGNA. The Extracellular segment spans residues 28–480; that stretch reads QTSVSPPKVI…TVNVLSPRYE (453 aa). Ig-like C2-type domains follow at residues 41 to 103 and 128 to 193; these read GGSV…QSTA and GKDL…LDLR. 3 disulfides stabilise this stretch: cysteine 48–cysteine 92, cysteine 52–cysteine 96, and cysteine 135–cysteine 186. Residues 152 to 154 carry the Cell attachment site; atypical motif; that stretch reads RGE. Residues asparagine 202 and asparagine 267 are each glycosylated (N-linked (GlcNAc...) asparagine). Ig-like C2-type domains are found at residues 230–297 and 325–378; these read DTQG…LGTQ and GTEV…LEVA. 2 disulfides stabilise this stretch: cysteine 237-cysteine 290 and cysteine 332-cysteine 371. N-linked (GlcNAc...) asparagine glycans are attached at residues asparagine 385 and asparagine 406. 3 cysteine pairs are disulfide-bonded: cysteine 403-cysteine 419, cysteine 419-cysteine 457, and cysteine 431-cysteine 457. Residues 412–464 enclose the Ig-like C2-type 5 domain; it reads NSQQTPMCQAWGNPLPELKCLKDGTFPLPVGESVTVTRDLEGTYLCRARSTQG. A helical transmembrane segment spans residues 481–503; that stretch reads FVIIAVVAAAVIMGTAGLSTYLY. Topologically, residues 504 to 532 are cytoplasmic; sequence NRQRKIRKYRLQQAQKGTPMKPNTQATPP. A phosphothreonine mark is found at threonine 521 and threonine 530.

This sequence belongs to the immunoglobulin superfamily. ICAM family. As to quaternary structure, homodimer. Interacts with MUC1 and promotes cell aggregation in epithelial cells. Interacts with ARHGEF26/SGEF. Interacts (on T cell side) with CD81, CD247 and CD9 at immunological synapses between antigen-presenting cells and T cells. In terms of processing, monoubiquitinated, which is promoted by MARCH9 and leads to endocytosis.

It localises to the membrane. Functionally, ICAM proteins are ligands for the leukocyte adhesion protein LFA-1 (integrin alpha-L/beta-2). During leukocyte trans-endothelial migration, ICAM1 engagement promotes the assembly of endothelial apical cups through ARHGEF26/SGEF and RHOG activation. This chain is Intercellular adhesion molecule 1 (ICAM1), found in Gorilla gorilla gorilla (Western lowland gorilla).